The following is a 201-amino-acid chain: Recombination protein RecR (201 aa).

The C4-type zinc finger occupies 57–72 (CTHCRTFTEEESCAIC). The Toprim domain maps to 81–176 (GFLCVVEQPS…KVSRIAHGIP (96 aa)).

It belongs to the RecR family.

May play a role in DNA repair. It seems to be involved in an RecBC-independent recombinational process of DNA repair. It may act with RecF and RecO. The chain is Recombination protein RecR from Histophilus somni (strain 2336) (Haemophilus somnus).